A 313-amino-acid chain; its full sequence is Porphobilinogen deaminase (313 aa).

Residue Cys-242 is modified to S-(dipyrrolylmethanemethyl)cysteine.

This sequence belongs to the HMBS family. Monomer. It depends on dipyrromethane as a cofactor.

It carries out the reaction 4 porphobilinogen + H2O = hydroxymethylbilane + 4 NH4(+). It functions in the pathway porphyrin-containing compound metabolism; protoporphyrin-IX biosynthesis; coproporphyrinogen-III from 5-aminolevulinate: step 2/4. Its function is as follows. Tetrapolymerization of the monopyrrole PBG into the hydroxymethylbilane pre-uroporphyrinogen in several discrete steps. This Photorhabdus laumondii subsp. laumondii (strain DSM 15139 / CIP 105565 / TT01) (Photorhabdus luminescens subsp. laumondii) protein is Porphobilinogen deaminase.